Consider the following 271-residue polypeptide: Ribosomal RNA small subunit methyltransferase A (271 aa).

S-adenosyl-L-methionine contacts are provided by His11, Leu13, Gly38, Glu59, Asp84, and Asn109.

Belongs to the class I-like SAM-binding methyltransferase superfamily. rRNA adenine N(6)-methyltransferase family. RsmA subfamily.

It is found in the cytoplasm. It catalyses the reaction adenosine(1518)/adenosine(1519) in 16S rRNA + 4 S-adenosyl-L-methionine = N(6)-dimethyladenosine(1518)/N(6)-dimethyladenosine(1519) in 16S rRNA + 4 S-adenosyl-L-homocysteine + 4 H(+). In terms of biological role, specifically dimethylates two adjacent adenosines (A1518 and A1519) in the loop of a conserved hairpin near the 3'-end of 16S rRNA in the 30S particle. May play a critical role in biogenesis of 30S subunits. This is Ribosomal RNA small subunit methyltransferase A from Trichormus variabilis (strain ATCC 29413 / PCC 7937) (Anabaena variabilis).